Consider the following 180-residue polypeptide: Adenine phosphoribosyltransferase (180 aa).

S2 carries the N-acetylserine modification. 2 positions are modified to phosphoserine: S15 and S30. Residue Y60 is modified to Phosphotyrosine. Residue S66 is modified to Phosphoserine. K114 carries the post-translational modification N6-acetyllysine. At T135 the chain carries Phosphothreonine.

It belongs to the purine/pyrimidine phosphoribosyltransferase family. As to quaternary structure, homodimer.

It localises to the cytoplasm. The enzyme catalyses AMP + diphosphate = 5-phospho-alpha-D-ribose 1-diphosphate + adenine. It functions in the pathway purine metabolism; AMP biosynthesis via salvage pathway; AMP from adenine: step 1/1. Its function is as follows. Catalyzes a salvage reaction resulting in the formation of AMP, that is energically less costly than de novo synthesis. This chain is Adenine phosphoribosyltransferase, found in Stochomys longicaudatus (Target rat).